We begin with the raw amino-acid sequence, 249 residues long: Methyl-coenzyme M reductase I subunit gamma (249 aa).

Position 120 (Arg-120) interacts with coenzyme M.

The protein belongs to the methyl-coenzyme M reductase gamma subunit family. As to quaternary structure, MCR is a hexamer of two alpha, two beta, and two gamma chains, forming a dimer of heterotrimers. Requires coenzyme F430 as cofactor.

It localises to the cytoplasm. The enzyme catalyses coenzyme B + methyl-coenzyme M = methane + coenzyme M-coenzyme B heterodisulfide. It functions in the pathway one-carbon metabolism; methyl-coenzyme M reduction; methane from methyl-coenzyme M: step 1/1. Functionally, component of the methyl-coenzyme M reductase (MCR) I that catalyzes the reductive cleavage of methyl-coenzyme M (CoM-S-CH3 or 2-(methylthio)ethanesulfonate) using coenzyme B (CoB or 7-mercaptoheptanoylthreonine phosphate) as reductant which results in the production of methane and the mixed heterodisulfide of CoB and CoM (CoM-S-S-CoB). This is the final step in methanogenesis. The polypeptide is Methyl-coenzyme M reductase I subunit gamma (mcrG) (Methanothermobacter thermautotrophicus (strain ATCC 29096 / DSM 1053 / JCM 10044 / NBRC 100330 / Delta H) (Methanobacterium thermoautotrophicum)).